We begin with the raw amino-acid sequence, 80 residues long: Cortexin-3 (80 aa).

A helical membrane pass occupies residues 28–48; it reads TTFVFVILLFIFLGILIVRCF.

This sequence belongs to the cortexin family.

Its subcellular location is the membrane. This Mus musculus (Mouse) protein is Cortexin-3 (Ctxn3).